Consider the following 454-residue polypeptide: Bifunctional protein GlmU (454 aa).

The segment at 1–226 (MALNVVILAA…AIEVEGANNR (226 aa)) is pyrophosphorylase. UDP-N-acetyl-alpha-D-glucosamine-binding positions include 8-11 (LAAG), Lys22, Gln73, 78-79 (GT), 100-102 (YGD), Gly137, Glu151, Asn166, and Asn224. Asp102 lines the Mg(2+) pocket. Position 224 (Asn224) interacts with Mg(2+). Residues 227–247 (VQLAQLERAYQAREAEKLMIA) are linker. An N-acetyltransferase region spans residues 248 to 454 (GANLRDPSRI…GWQRPVKIKK (207 aa)). UDP-N-acetyl-alpha-D-glucosamine-binding residues include Arg330 and Lys348. Catalysis depends on His360, which acts as the Proton acceptor. Residues Tyr363 and Asn374 each coordinate UDP-N-acetyl-alpha-D-glucosamine. Residues Ala377, 383–384 (NY), Ser402, Ala420, and Arg437 contribute to the acetyl-CoA site.

The protein in the N-terminal section; belongs to the N-acetylglucosamine-1-phosphate uridyltransferase family. It in the C-terminal section; belongs to the transferase hexapeptide repeat family. In terms of assembly, homotrimer. The cofactor is Mg(2+).

The protein localises to the cytoplasm. It carries out the reaction alpha-D-glucosamine 1-phosphate + acetyl-CoA = N-acetyl-alpha-D-glucosamine 1-phosphate + CoA + H(+). It catalyses the reaction N-acetyl-alpha-D-glucosamine 1-phosphate + UTP + H(+) = UDP-N-acetyl-alpha-D-glucosamine + diphosphate. The protein operates within nucleotide-sugar biosynthesis; UDP-N-acetyl-alpha-D-glucosamine biosynthesis; N-acetyl-alpha-D-glucosamine 1-phosphate from alpha-D-glucosamine 6-phosphate (route II): step 2/2. It functions in the pathway nucleotide-sugar biosynthesis; UDP-N-acetyl-alpha-D-glucosamine biosynthesis; UDP-N-acetyl-alpha-D-glucosamine from N-acetyl-alpha-D-glucosamine 1-phosphate: step 1/1. It participates in bacterial outer membrane biogenesis; LPS lipid A biosynthesis. Its function is as follows. Catalyzes the last two sequential reactions in the de novo biosynthetic pathway for UDP-N-acetylglucosamine (UDP-GlcNAc). The C-terminal domain catalyzes the transfer of acetyl group from acetyl coenzyme A to glucosamine-1-phosphate (GlcN-1-P) to produce N-acetylglucosamine-1-phosphate (GlcNAc-1-P), which is converted into UDP-GlcNAc by the transfer of uridine 5-monophosphate (from uridine 5-triphosphate), a reaction catalyzed by the N-terminal domain. The protein is Bifunctional protein GlmU of Shewanella sp. (strain MR-4).